Here is an 87-residue protein sequence, read N- to C-terminus: uncharacterized protein (87 aa).

It localises to the host cytoplasm. This is an uncharacterized protein from Escherichia phage Mu (Bacteriophage Mu).